Here is an 874-residue protein sequence, read N- to C-terminus: Cellulose synthase catalytic subunit [UDP-forming] (874 aa).

The next 4 membrane-spanning stretches (helical) occupy residues 30–50 (SPFS…VFPL), 151–171 (ILGV…TQPF), 173–193 (PLSQ…VRRM), and 230–250 (LVCG…LVLG). Residues 271-364 (QWPTVDIFVP…FVAIFDCDHV (94 aa)) are catalytic subdomain A. Residue Asp-313 is part of the active site. Positions 360 and 362 each coordinate substrate. Residues 441–501 (KPLDEIGGIA…GQRIRWARGM (61 aa)) form a catalytic subdomain B region. Residue Asp-457 is part of the active site. The next 5 membrane-spanning stretches (helical) occupy residues 525 to 545 (LNAM…TAPL), 547 to 567 (FLLL…LFVI), 592 to 612 (IYET…LINP), 634 to 654 (VISR…AAGV), and 668 to 688 (VIVS…AVAV). The 97-residue stretch at 694 to 790 (QVRRAHRVEI…QHIDFVQCTF (97 aa)) folds into the PilZ domain. A helical membrane pass occupies residues 833–853 (SVKVIFRSLTALIAWIVSFIP).

This sequence belongs to the glycosyltransferase 2 family. Mg(2+) serves as cofactor.

It localises to the cell inner membrane. The catalysed reaction is [(1-&gt;4)-beta-D-glucosyl](n) + UDP-alpha-D-glucose = [(1-&gt;4)-beta-D-glucosyl](n+1) + UDP + H(+). It participates in glycan metabolism; bacterial cellulose biosynthesis. Activated by bis-(3'-5') cyclic diguanylic acid (c-di-GMP). Functionally, catalytic subunit of cellulose synthase. It polymerizes uridine 5'-diphosphate glucose to cellulose, which is produced as an extracellular component for mechanical and chemical protection at the onset of the stationary phase, when the cells exhibit multicellular behavior (rdar morphotype). Coexpression of cellulose and thin aggregative fimbriae leads to a hydrophobic network with tightly packed cells embedded in a highly inert matrix. In Salmonella typhimurium (strain LT2 / SGSC1412 / ATCC 700720), this protein is Cellulose synthase catalytic subunit [UDP-forming] (bcsA).